Reading from the N-terminus, the 43-residue chain is ORF7b protein (43 aa).

A helical membrane pass occupies residues 9–29 (FYLCFLAFLLFLVLIMLIIFW).

Its subcellular location is the host Golgi apparatus membrane. It localises to the host endosome membrane. In Homo sapiens (Human), this protein is ORF7b protein.